Consider the following 99-residue polypeptide: Putative septation protein SpoVG (99 aa).

The protein belongs to the SpoVG family.

Functionally, could be involved in septation. The chain is Putative septation protein SpoVG from Exiguobacterium sp. (strain ATCC BAA-1283 / AT1b).